The primary structure comprises 103 residues: Large ribosomal subunit protein uL24 (103 aa).

Belongs to the universal ribosomal protein uL24 family. In terms of assembly, part of the 50S ribosomal subunit.

Its function is as follows. One of two assembly initiator proteins, it binds directly to the 5'-end of the 23S rRNA, where it nucleates assembly of the 50S subunit. Functionally, one of the proteins that surrounds the polypeptide exit tunnel on the outside of the subunit. In Syntrophomonas wolfei subsp. wolfei (strain DSM 2245B / Goettingen), this protein is Large ribosomal subunit protein uL24.